A 138-amino-acid polypeptide reads, in one-letter code: Phosphoribosyl-AMP cyclohydrolase (138 aa).

Aspartate 84 is a binding site for Mg(2+). Cysteine 85 provides a ligand contact to Zn(2+). Residues aspartate 86 and aspartate 88 each coordinate Mg(2+). Residues cysteine 102 and cysteine 109 each contribute to the Zn(2+) site.

It belongs to the PRA-CH family. Homodimer. Mg(2+) serves as cofactor. It depends on Zn(2+) as a cofactor.

The protein resides in the cytoplasm. The enzyme catalyses 1-(5-phospho-beta-D-ribosyl)-5'-AMP + H2O = 1-(5-phospho-beta-D-ribosyl)-5-[(5-phospho-beta-D-ribosylamino)methylideneamino]imidazole-4-carboxamide. It functions in the pathway amino-acid biosynthesis; L-histidine biosynthesis; L-histidine from 5-phospho-alpha-D-ribose 1-diphosphate: step 3/9. Functionally, catalyzes the hydrolysis of the adenine ring of phosphoribosyl-AMP. The chain is Phosphoribosyl-AMP cyclohydrolase from Burkholderia ambifaria (strain ATCC BAA-244 / DSM 16087 / CCUG 44356 / LMG 19182 / AMMD) (Burkholderia cepacia (strain AMMD)).